A 255-amino-acid polypeptide reads, in one-letter code: Cell division protein ZapD (255 aa).

This sequence belongs to the ZapD family. As to quaternary structure, interacts with FtsZ.

It is found in the cytoplasm. Cell division factor that enhances FtsZ-ring assembly. Directly interacts with FtsZ and promotes bundling of FtsZ protofilaments, with a reduction in FtsZ GTPase activity. In Methylococcus capsulatus (strain ATCC 33009 / NCIMB 11132 / Bath), this protein is Cell division protein ZapD.